A 209-amino-acid chain; its full sequence is Large ribosomal subunit protein uL3 (209 aa).

Residues 141-163 are disordered; that stretch reads RAVGSMGASSDPSRTFKNKRMPG.

This sequence belongs to the universal ribosomal protein uL3 family. In terms of assembly, part of the 50S ribosomal subunit. Forms a cluster with proteins L14 and L19.

In terms of biological role, one of the primary rRNA binding proteins, it binds directly near the 3'-end of the 23S rRNA, where it nucleates assembly of the 50S subunit. The chain is Large ribosomal subunit protein uL3 from Clostridium botulinum (strain ATCC 19397 / Type A).